Reading from the N-terminus, the 75-residue chain is Small ribosomal subunit protein bS18 (75 aa).

The residue at position 2 (alanine 2) is an N-acetylalanine.

It belongs to the bacterial ribosomal protein bS18 family. Part of the 30S ribosomal subunit. Forms a tight heterodimer with protein bS6.

Its function is as follows. Binds as a heterodimer with protein bS6 to the central domain of the 16S rRNA, where it helps stabilize the platform of the 30S subunit. This Salmonella typhimurium (strain LT2 / SGSC1412 / ATCC 700720) protein is Small ribosomal subunit protein bS18 (rpsR).